The chain runs to 594 residues: MSYEKKSVEGAYIDDSTTFEAFHLDSRLLQAIKNIGFQYPTLIQSHAIPLALQQKRDIIAKAATGSGKTLAYLIPVIETILEYKKTIDNGEENGTLGIILVPTRELAQQVYNVLEKLVLYCSKDIRTLNISSDMSDSVLSTLLMDQPEIIVGTPGKLLDLLQTKINSISLNELKFLVVDEVDLVLTFGYQDDLNKIGEYLPLKKNLQTFLMSATLNDDIQALKQKFCRSPAILKFNDEEINKNQNKLLQYYVKVSEFDKFLLCYVIFKLNLIKGKTLIFVNNIDRGYRLKLVMEQFGIKSCILNSELPVNSRQHIVDQFNKNVYQLLIATDDTEYIKEEDDEIEEGHNTENQEEKSLEGEPENDKKPSKKKKVQVKKDKEYGVSRGVDFKNVACVLNFDLPTTAKSYVHRVGRTARGGKTGTAISFVVPLKEFGKHKPSMLQTAKKDERILSRIIKQQSKLGLELQPYKFDQKQVEAFRYRMEDGFRAVTQVAIREARVKELKQELLASEKLKRHFEENPKELQSLRHDKELHPARVQQHLKRVPDYLLPESARGNGTKVKFVPFHNAKKRHSHKKGRVSKPKNGKVDPLKNFK.

A Q motif motif is present at residues 17-45 (TTFEAFHLDSRLLQAIKNIGFQYPTLIQS). Residues 49–233 (PLALQQKRDI…QKFCRSPAIL (185 aa)) enclose the Helicase ATP-binding domain. An ATP-binding site is contributed by 62 to 69 (AATGSGKT). Positions 179–182 (DEVD) match the DEAD box motif. The Helicase C-terminal domain occupies 246 to 476 (KLLQYYVKVS…PYKFDQKQVE (231 aa)). Disordered stretches follow at residues 339–377 (EDDEIEEGHNTENQEEKSLEGEPENDKKPSKKKKVQVKK) and 558–594 (TKVKFVPFHNAKKRHSHKKGRVSKPKNGKVDPLKNFK). The segment covering 345–366 (EGHNTENQEEKSLEGEPENDKK) has biased composition (basic and acidic residues). A compositionally biased stretch (basic residues) spans 567 to 584 (NAKKRHSHKKGRVSKPKN). The span at 585-594 (GKVDPLKNFK) shows a compositional bias: basic and acidic residues.

The protein belongs to the DEAD box helicase family. DDX56/DBP9 subfamily. As to quaternary structure, interacts with DBP6.

The protein localises to the nucleus. It is found in the nucleolus. It carries out the reaction ATP + H2O = ADP + phosphate + H(+). Functionally, ATP-binding RNA helicase involved in the biogenesis of 60S ribosomal subunits and is required for the normal formation of 25S and 5.8S rRNAs. The protein is ATP-dependent RNA helicase DBP9 (DBP9) of Saccharomyces cerevisiae (strain YJM789) (Baker's yeast).